The primary structure comprises 1104 residues: Lon protease homolog, mitochondrial (1104 aa).

The transit peptide at 1-58 (MLPLRAFARLAQRPRLSRPTQLARSSLPRPSPSRPAAHYLALAPAPSTRFLHSSPPVL) directs the protein to the mitochondrion. The interval 8–144 (ARLAQRPRLS…PGAGGPKEVA (137 aa)) is disordered. Positions 22 to 46 (LARSSLPRPSPSRPAAHYLALAPAP) are enriched in low complexity. Residues 80–103 (KQDDQVEKPLPDAESSKSAEERAK) show a composition bias toward basic and acidic residues. Positions 104 to 128 (SQSSKPDIKASSSDSVSSSAPAPGS) are enriched in low complexity. Over residues 129 to 139 (ADGGSPPGAGG) the composition is skewed to gly residues. Positions 155–444 (VLAIPITHRP…RALVLLKKEL (290 aa)) constitute a Lon N-terminal domain. 597-604 (GPPGVGKT) serves as a coordination point for ATP. Residues 895–1082 (SPPAGVSTGL…RQVLHEAFRG (188 aa)) form the Lon proteolytic domain. Residues serine 987 and lysine 1030 contribute to the active site.

It belongs to the peptidase S16 family. In terms of assembly, homohexamer or homoheptamer. Organized in a ring with a central cavity.

It is found in the mitochondrion matrix. The enzyme catalyses Hydrolysis of proteins in presence of ATP.. ATP-dependent serine protease that mediates the selective degradation of misfolded, unassembled or oxidatively damaged polypeptides as well as certain short-lived regulatory proteins in the mitochondrial matrix. May also have a chaperone function in the assembly of inner membrane protein complexes. Participates in the regulation of mitochondrial gene expression and in the maintenance of the integrity of the mitochondrial genome. Binds to mitochondrial DNA in a site-specific manner. The chain is Lon protease homolog, mitochondrial from Cryptococcus neoformans var. neoformans serotype D (strain B-3501A) (Filobasidiella neoformans).